The following is a 295-amino-acid chain: Septu protein PtuB (295 aa).

Component of antiviral defense system Septu type II, composed of PtuA and PtuB. Expression of Septu type II in B.subtilis (strain BEST7003) confers resistance to phages SBSphiC and SpBeta. May be a nuclease. In Bacillus mycoides (strain KBAB4) (Bacillus weihenstephanensis), this protein is Septu protein PtuB.